A 70-amino-acid chain; its full sequence is uncharacterized protein (70 aa).

The HTH cro/C1-type domain occupies 5–59; sequence IREFRAKYGMTQEELAKKVGVRRETIVFLEKGKYNPSLRLAYKIARVFNARIEDL. Positions 16–35 form a DNA-binding region, H-T-H motif; it reads QEELAKKVGVRRETIVFLEK.

This is an uncharacterized protein from Archaeoglobus fulgidus (strain ATCC 49558 / DSM 4304 / JCM 9628 / NBRC 100126 / VC-16).